The following is a 152-amino-acid chain: Deoxyuridine 5'-triphosphate nucleotidohydrolase (152 aa).

Residues 71-73 (RSG), Asn84, 88-90 (LID), and Met98 each bind substrate.

Belongs to the dUTPase family. Mg(2+) is required as a cofactor.

The catalysed reaction is dUTP + H2O = dUMP + diphosphate + H(+). It functions in the pathway pyrimidine metabolism; dUMP biosynthesis; dUMP from dCTP (dUTP route): step 2/2. In terms of biological role, this enzyme is involved in nucleotide metabolism: it produces dUMP, the immediate precursor of thymidine nucleotides and it decreases the intracellular concentration of dUTP so that uracil cannot be incorporated into DNA. In Salmonella arizonae (strain ATCC BAA-731 / CDC346-86 / RSK2980), this protein is Deoxyuridine 5'-triphosphate nucleotidohydrolase.